A 296-amino-acid polypeptide reads, in one-letter code: Acetylglutamate kinase (296 aa).

Substrate contacts are provided by residues 69–70 (GG), R91, and N193.

This sequence belongs to the acetylglutamate kinase family. ArgB subfamily.

It localises to the cytoplasm. It catalyses the reaction N-acetyl-L-glutamate + ATP = N-acetyl-L-glutamyl 5-phosphate + ADP. It functions in the pathway amino-acid biosynthesis; L-arginine biosynthesis; N(2)-acetyl-L-ornithine from L-glutamate: step 2/4. Catalyzes the ATP-dependent phosphorylation of N-acetyl-L-glutamate. This chain is Acetylglutamate kinase, found in Albidiferax ferrireducens (strain ATCC BAA-621 / DSM 15236 / T118) (Rhodoferax ferrireducens).